The chain runs to 222 residues: Deoxyribose-phosphate aldolase (222 aa).

Aspartate 93 functions as the Proton donor/acceptor in the catalytic mechanism. The active-site Schiff-base intermediate with acetaldehyde is lysine 156. Lysine 186 serves as the catalytic Proton donor/acceptor.

This sequence belongs to the DeoC/FbaB aldolase family. DeoC type 1 subfamily.

It is found in the cytoplasm. It catalyses the reaction 2-deoxy-D-ribose 5-phosphate = D-glyceraldehyde 3-phosphate + acetaldehyde. The protein operates within carbohydrate degradation; 2-deoxy-D-ribose 1-phosphate degradation; D-glyceraldehyde 3-phosphate and acetaldehyde from 2-deoxy-alpha-D-ribose 1-phosphate: step 2/2. In terms of biological role, catalyzes a reversible aldol reaction between acetaldehyde and D-glyceraldehyde 3-phosphate to generate 2-deoxy-D-ribose 5-phosphate. The chain is Deoxyribose-phosphate aldolase from Corynebacterium glutamicum (strain ATCC 13032 / DSM 20300 / JCM 1318 / BCRC 11384 / CCUG 27702 / LMG 3730 / NBRC 12168 / NCIMB 10025 / NRRL B-2784 / 534).